A 336-amino-acid polypeptide reads, in one-letter code: MLPFFPEPSLSYTQQNRTAVLLLNLGTPDAPTAQAVRPYLKSFLTDRRVVELPKWLWYPILHGLVLTLRPKKSAHAYEKIWFKEGSPLEVYTARQAAALAKRMPDLIVRHAMTYGNPSVADVLSELKAQGAGRLLVIPMYPQYAASSSGAAVDKVCEQLLLQRNQMSVRTVSRFYDDTGYIDAMKNHILRYWAEHGRGKKLMLSFHGVPQKHHDLGDPYPDECRHTAKLLAEALELTEDQYVVSFQSQFGRAKWVTPSTQDLFGKLPKQGVTELDVFCPGFLADCLETMEEIALMGREQFYEAGGKSYRYIPCLNDNPDWIDALVALAEENLGSWR.

Fe cation is bound by residues H206 and E287.

The protein belongs to the ferrochelatase family.

The protein localises to the cytoplasm. It catalyses the reaction heme b + 2 H(+) = protoporphyrin IX + Fe(2+). The protein operates within porphyrin-containing compound metabolism; protoheme biosynthesis; protoheme from protoporphyrin-IX: step 1/1. Functionally, catalyzes the ferrous insertion into protoporphyrin IX. The protein is Ferrochelatase of Neisseria meningitidis serogroup B (strain ATCC BAA-335 / MC58).